The following is a 69-amino-acid chain: Protein transport protein Sec61 subunit gamma (69 aa).

Over 1–32 (MDAVDSVVDPLREFAKDSVRLVKRCHKPDRKE) the chain is Cytoplasmic. A helical transmembrane segment spans residues 33–61 (FTKVAARTAIGFVVMGFVGFFVKLIFIPI). At 62–69 (NNIIVGSG) the chain is on the extracellular side.

It belongs to the SecE/SEC61-gamma family. Heterotrimeric complex composed of SEC61-alpha, SEC61-beta and SEC61-gamma.

It localises to the endoplasmic reticulum membrane. Necessary for protein translocation in the endoplasmic reticulum. The chain is Protein transport protein Sec61 subunit gamma from Oryza sativa subsp. japonica (Rice).